The sequence spans 464 residues: MTRYFSIVLSLLLAVSCVFLPVASARQQQHQPLDRIVAVVDDNVVLKSELDRAIHNVKSQYVGHEGQLPPDEVLQRQVLERLILIKLQVARAQTNGIRVSDDELNQAISSIAENNKTSVDGLRQKLVAEGISFPEFRQSVRDEITVHHLRQGFAQSRIVVSEGEVDTALAQASSGAQYHLQHILVAVPDGATSQQIAIAQKKIDGIKSVIDKGELAFSAAAVRYSDSPNALESGDLGWRSLDEIPEAFAQMVQTMKPGQIVGPLRGTSGFQLLKLVEVRDSAAAAAGPRQMATEYHARHILVRITEKQKEAEAKAKIDTLRARIAGGADFQTVARESSEDANNSNQGGDLGWFPSDAFGADFGNHVKALADGNVSEPFRSAAGWHIVQRLGTRQTDVTRENQRAQIRDTIGQRKLEESYERFLRELRSEAYVSLQIEEPADDHQTPSAAVIPATGAVLPSATKH.

Residues 1–25 form the signal peptide; sequence MTRYFSIVLSLLLAVSCVFLPVASA. 2 PpiC domains span residues 175 to 277 and 292 to 391; these read GAQY…KLVE and ATEY…QRLG. A disordered region spans residues 439 to 464; it reads PADDHQTPSAAVIPATGAVLPSATKH.

Its subcellular location is the periplasm. It carries out the reaction [protein]-peptidylproline (omega=180) = [protein]-peptidylproline (omega=0). Chaperone involved in the correct folding and assembly of outer membrane proteins. Recognizes specific patterns of aromatic residues and the orientation of their side chains, which are found more frequently in integral outer membrane proteins. May act in both early periplasmic and late outer membrane-associated steps of protein maturation. The sequence is that of Chaperone SurA from Xylella fastidiosa (strain 9a5c).